A 178-amino-acid polypeptide reads, in one-letter code: Ribosome maturation factor RimM (178 aa).

The PRC barrel domain maps to 94–174; that stretch reads KNEFFWFDLI…RIDVINSFDI (81 aa).

Belongs to the RimM family. As to quaternary structure, binds ribosomal protein uS19.

It is found in the cytoplasm. An accessory protein needed during the final step in the assembly of 30S ribosomal subunit, possibly for assembly of the head region. Essential for efficient processing of 16S rRNA. May be needed both before and after RbfA during the maturation of 16S rRNA. It has affinity for free ribosomal 30S subunits but not for 70S ribosomes. The chain is Ribosome maturation factor RimM from Aliarcobacter butzleri (strain RM4018) (Arcobacter butzleri).